The sequence spans 410 residues: Indoleamine 2,3-dioxygenase nanC (410 aa).

Residue H309 participates in heme binding.

The protein belongs to the indoleamine 2,3-dioxygenase family. It depends on heme as a cofactor.

The catalysed reaction is D-tryptophan + O2 = N-formyl-D-kynurenine. It catalyses the reaction L-tryptophan + O2 = N-formyl-L-kynurenine. It functions in the pathway secondary metabolite biosynthesis. Functionally, indoleamine 2,3-dioxygenase; part of the gene cluster that mediates the biosynthesis of the benzazepine alkaloid nanangelenin A which contains an unprecedented 3,4-dihydro-1-benzazepine-2,5-dione-N-prenyl-N-acetoxy-anthranilamide scaffold. The first step of nanangelenin biosynthesis is catalyzed by the indoleamine 2,3-dioxygenase nanC which produces N-formyl-kynurenine through the catabolism of tryptophan. The two-module NRPS nanA then utilizes anthranilate (Ant) and L-kynurenine (L-Kyn) to assemble the dipeptide product nanangelenin B. The first adenylation domain of nanA (A1) loads anthranilate onto the T1 domain, while A2 loads kynurenine, generated through spontaneous nonenzymatic deformylation of the nanC-supplied N-formyl-kynurenine. The peptide bond formation between the tethered amino acids is catalyzed by the first condensation domain (C1) between anthranilate's carbonyl carbon and kynurenine's aliphatic primary amine. The second C domain (C2) catalyzes the final cyclization event between the aromatic amine of kynurenine and the tethered carbonyl carbon, yielding nanangelenin B. The terminal T3 domain enhances the catalytic efficiency of C2, suggesting the T2-tethered Ant-L-Kyn is transferred to T3 prior to cyclization by C2. Once released from nanA, nanangelenin B is then prenylated by the prenyltransferase nanD to form nanangelenin C. Nanangelenin C is then N-hydroxylated by the FAD-dependent monooxygenase nanF and further acetylated by the acetyltransferase nanB to yield nanangelenin F. Finally, the N-methyltransferase nanE methylates the amide nitrogen of 1-benzazepine to convert nanangelenin F into nanangelenin A. NanE is also able to methylate most of the intermediates of the pathway such as nanangelenin B and nanangelenin C to produce nanangelenin D and nanangelenin E, respectively. This is Indoleamine 2,3-dioxygenase nanC from Aspergillus nanangensis.